The sequence spans 235 residues: Ribonuclease 3 (235 aa).

Residues 6–131 (IDQLKKLTGH…LIAVIYLDGG (126 aa)) form the RNase III domain. Residue E44 participates in Mg(2+) binding. D48 is an active-site residue. Mg(2+)-binding residues include D117 and E120. E120 is a catalytic residue. The region spanning 156–225 (DAKTELQEWA…AEKILRREGM (70 aa)) is the DRBM domain.

The protein belongs to the ribonuclease III family. As to quaternary structure, homodimer. Mg(2+) is required as a cofactor.

Its subcellular location is the cytoplasm. It catalyses the reaction Endonucleolytic cleavage to 5'-phosphomonoester.. Digests double-stranded RNA. Involved in the processing of primary rRNA transcript to yield the immediate precursors to the large and small rRNAs (23S and 16S). Processes some mRNAs, and tRNAs when they are encoded in the rRNA operon. Processes pre-crRNA and tracrRNA of type II CRISPR loci if present in the organism. The chain is Ribonuclease 3 from Bartonella bacilliformis (strain ATCC 35685 / KC583 / Herrer 020/F12,63).